The sequence spans 361 residues: Phosphoserine aminotransferase (361 aa).

2 residues coordinate L-glutamate: Ser-9 and Arg-42. Residues 76 to 77 (AR), Trp-102, Thr-153, Asp-173, and Gln-196 each bind pyridoxal 5'-phosphate. Lys-197 is modified (N6-(pyridoxal phosphate)lysine). 238–239 (NT) serves as a coordination point for pyridoxal 5'-phosphate.

Belongs to the class-V pyridoxal-phosphate-dependent aminotransferase family. SerC subfamily. Homodimer. Requires pyridoxal 5'-phosphate as cofactor.

The protein resides in the cytoplasm. The catalysed reaction is O-phospho-L-serine + 2-oxoglutarate = 3-phosphooxypyruvate + L-glutamate. It carries out the reaction 4-(phosphooxy)-L-threonine + 2-oxoglutarate = (R)-3-hydroxy-2-oxo-4-phosphooxybutanoate + L-glutamate. The protein operates within amino-acid biosynthesis; L-serine biosynthesis; L-serine from 3-phospho-D-glycerate: step 2/3. Its pathway is cofactor biosynthesis; pyridoxine 5'-phosphate biosynthesis; pyridoxine 5'-phosphate from D-erythrose 4-phosphate: step 3/5. In terms of biological role, catalyzes the reversible conversion of 3-phosphohydroxypyruvate to phosphoserine and of 3-hydroxy-2-oxo-4-phosphonooxybutanoate to phosphohydroxythreonine. The protein is Phosphoserine aminotransferase of Erwinia tasmaniensis (strain DSM 17950 / CFBP 7177 / CIP 109463 / NCPPB 4357 / Et1/99).